Consider the following 358-residue polypeptide: F-box protein At4g35733 (358 aa).

Residues 4–51 (ATVWSDLPGELLDHIANGLFSKVELLRFRSICKTFRSAVDSDKNFLDH) form the F-box domain.

In terms of assembly, part of a SCF (ASK-cullin-F-box) protein ligase complex.

It functions in the pathway protein modification; protein ubiquitination. Functionally, component of SCF(ASK-cullin-F-box) E3 ubiquitin ligase complexes, which may mediate the ubiquitination and subsequent proteasomal degradation of target proteins. The sequence is that of F-box protein At4g35733 from Arabidopsis thaliana (Mouse-ear cress).